Reading from the N-terminus, the 374-residue chain is Mannitol-1-phosphate 5-dehydrogenase (374 aa).

3–14 lines the NAD(+) pocket; the sequence is AVHFGAGNIGRG.

The protein belongs to the mannitol dehydrogenase family.

It carries out the reaction D-mannitol 1-phosphate + NAD(+) = beta-D-fructose 6-phosphate + NADH + H(+). The polypeptide is Mannitol-1-phosphate 5-dehydrogenase (Shouchella clausii (strain KSM-K16) (Alkalihalobacillus clausii)).